The primary structure comprises 401 residues: Argininosuccinate synthase (401 aa).

8–16 (AYSGGLDTS) serves as a coordination point for ATP. Tyr-85 serves as a coordination point for L-citrulline. Gly-115 lines the ATP pocket. L-aspartate is bound by residues Thr-117, Asn-121, and Asp-122. Asn-121 serves as a coordination point for L-citrulline. Positions 125, 173, 182, 258, and 270 each coordinate L-citrulline.

It belongs to the argininosuccinate synthase family. Type 1 subfamily. In terms of assembly, homotetramer.

The protein resides in the cytoplasm. The enzyme catalyses L-citrulline + L-aspartate + ATP = 2-(N(omega)-L-arginino)succinate + AMP + diphosphate + H(+). It participates in amino-acid biosynthesis; L-arginine biosynthesis; L-arginine from L-ornithine and carbamoyl phosphate: step 2/3. The chain is Argininosuccinate synthase from Staphylococcus saprophyticus subsp. saprophyticus (strain ATCC 15305 / DSM 20229 / NCIMB 8711 / NCTC 7292 / S-41).